We begin with the raw amino-acid sequence, 453 residues long: Probable multidrug resistance protein NorM (453 aa).

12 helical membrane passes run valine 12 to valine 34, threonine 54 to glycine 76, tyrosine 96 to asparagine 118, alanine 128 to isoleucine 150, leucine 162 to glycine 184, alanine 194 to phenylalanine 216, leucine 243 to methionine 265, leucine 285 to alanine 307, leucine 319 to phenylalanine 338, arginine 358 to leucine 380, valine 387 to threonine 406, and alanine 416 to leucine 438.

This sequence belongs to the multi antimicrobial extrusion (MATE) (TC 2.A.66.1) family.

Its subcellular location is the cell membrane. Multidrug efflux pump. This is Probable multidrug resistance protein NorM (norM) from Streptococcus pneumoniae (strain ATCC BAA-255 / R6).